The chain runs to 490 residues: Glutamate--tRNA ligase (490 aa).

Positions 15–25 (PSPTGYLHVGG) match the 'HIGH' region motif. Residues 259 to 263 (KLSKR) carry the 'KMSKS' region motif. Lys-262 contacts ATP.

This sequence belongs to the class-I aminoacyl-tRNA synthetase family. Glutamate--tRNA ligase type 1 subfamily. Monomer.

The protein localises to the cytoplasm. It carries out the reaction tRNA(Glu) + L-glutamate + ATP = L-glutamyl-tRNA(Glu) + AMP + diphosphate. Its function is as follows. Catalyzes the attachment of glutamate to tRNA(Glu) in a two-step reaction: glutamate is first activated by ATP to form Glu-AMP and then transferred to the acceptor end of tRNA(Glu). This is Glutamate--tRNA ligase from Bdellovibrio bacteriovorus (strain ATCC 15356 / DSM 50701 / NCIMB 9529 / HD100).